Consider the following 267-residue polypeptide: X-box-binding protein 1 (267 aa).

The Cytoplasmic segment spans residues 1 to 180; it reads MVVVAAAPSA…VQAQLSPPQN (180 aa). Positions 35–56 are disordered; the sequence is VPGPRAAGSEASGTPQARKRQR. Ser-61 carries the phosphoserine modification. The bZIP domain occupies 63 to 126; that stretch reads EEKALRRKLK…HGLVVENQEL (64 aa). Residues 65–87 are basic motif; it reads KALRRKLKNRVAAQTARDRKKAR. Residues 69–85 are nuclear localization signal (NLS); it reads RKLKNRVAAQTARDRKK. The tract at residues 91 to 126 is leucine-zipper; the sequence is LEQQVVDLEEENHKLQLENQLLREKTHGLVVENQEL. The chain crosses the membrane as a helical; Signal-anchor for type II membrane protein span at residues 181–198; that stretch reads IFPWTLTLLPLQILSLIS. At 199-267 the chain is on the lumenal side; it reads FWAFWTSWTL…FVLTMYTPSL (69 aa). The segment at 230–256 is necessary for the translational pausing of its own mRNA; sequence QKDLVPYQPPFLCQWGPHQPSWKPLMN.

The protein belongs to the bZIP family. As to quaternary structure, isoform 1 interacts with HM13. Isoform 1 interacts with RNF139; the interaction induces ubiquitination and degradation of isoform 1. Isoform 1 interacts (via luminal domain) with DERL1; the interaction obviates the need for ectodomain shedding prior HM13/SPP-mediated XBP1 isoform 1 cleavage. Isoform 1 interacts with isoform 2; the interaction sequesters isoform 2 from the nucleus and enhances isoform 2 degradation in the cytoplasm. Isoform 1 interacts with HDAC3 and AKT1; the interactions occur in endothelial cell (EC) under disturbed flow. Isoform 1 interacts with the oncoprotein FOS. Isoform 2 interacts with ATF6; the interaction occurs in a ER stress-dependent manner and is required for DNA binding to the unfolded protein response element (UPRE). Isoform 2 interacts with PIK3R1; the interaction is direct and induces translocation of XBP1 isoform 2 into the nucleus and the unfolded protein response (UPR) XBP1-dependent target genes activation in a ER stress- and/or insulin-dependent but PI3K-independent manner. Isoform 2 interacts with SIRT1. Isoform 2 interacts with PIK3R1 and PIK3R2; the interactions are direct and induce translocation of XBP1 isoform 2 into the nucleus and the unfolded protein response (UPR) XBP1-dependent target genes activation in a ER stress- and/or insulin-dependent but PI3K-independent manner. Isoform 2 interacts with FOXO1; the interaction is direct and leads to FOXO1 ubiquitination and degradation via the proteasome pathway in hepatocytes. Acetylated by EP300; acetylation positively regulates the transcriptional activity of XBP1 isoform 2. Isoform 2 is deacetylated by SIRT1; deacetylation negatively regulates the transcriptional activity of XBP1 isoform 2. Post-translationally, ubiquitinated, leading to proteasomal degradation in response to ER stress. In terms of processing, X-box-binding protein 1, cytoplasmic form and luminal form are produced by intramembrane proteolytic cleavage of ER membrane-anchored isoform 1 triggered by HM13/SPP in a DERL1-RNF139-dependent and VCP/p97-independent manner. X-box-binding protein 1, luminal form is ubiquitinated leading to proteasomal degradation. Isoform 1 and isoform 2 are expressed at higher level in branch curves of vessel walls and in atherosclerotic plaques relative to healthy segments of the same aortas (at protein level). Expressed in skeletal muscles, plasma cells and pancreatic beta cells. Isoform 1 and isoform 2 are expressed in gonadal adipose tissue. Isoform 1 is expressed in inguinal adipose tissue.

Its subcellular location is the endoplasmic reticulum. It localises to the nucleus. The protein localises to the cytoplasm. The protein resides in the endoplasmic reticulum membrane. It is found in the membrane. Its function is as follows. Functions as a transcription factor during endoplasmic reticulum stress by regulating the unfolded protein response (UPR). Required for cardiac myogenesis and hepatogenesis during embryonic development and the development of secretory tissues such as exocrine pancreas and salivary gland. Involved in differentiation of B lymphocytes to plasma cells and production of immunoglobulins. Modulates the cellular response to ER stress in a PIK3R-dependent manner. Binds to the cis-acting X box present in the promoter regions of major histocompatibility complex class II genes. Involved in VEGF-induced endothelial cell (EC) proliferation and retinal blood vessel formation during embryonic development but also for angiogenesis in adult tissues under ischemic conditions. Also functions as a major regulator of the UPR in obesity-induced insulin resistance and type 2 diabetes for the management of obesity and diabetes prevention. Functionally, plays a role in the unconventional cytoplasmic splicing processing of its own mRNA triggered by the endoplasmic reticulum (ER) transmembrane endoribonuclease ERN1: upon ER stress, the emerging XBP1 polypeptide chain, as part of a mRNA-ribosome-nascent chain (R-RNC) complex, cotranslationally recruits its own unprocessed mRNA through transient docking to the ER membrane and translational pausing, therefore facilitating efficient IRE1-mediated XBP1 mRNA isoform 2 production. In endothelial cells (EC), associated with KDR, promotes IRE1-mediated XBP1 mRNA isoform 2 production in a vascular endothelial growth factor (VEGF)-dependent manner, leading to EC proliferation and angiogenesis. Functions as a negative feed-back regulator of the potent transcription factor XBP1 isoform 2 protein levels through proteasome-mediated degradation, thus preventing the constitutive activation of the ER stress response signaling pathway. Inhibits the transactivation activity of XBP1 isoform 2 in myeloma cells. Acts as a weak transcriptional factor. Together with HDAC3, contributes to the activation of NFE2L2-mediated HMOX1 transcription factor gene expression in a PI(3)K/mTORC2/Akt-dependent signaling pathway leading to EC survival under disturbed flow/oxidative stress. Binds to the ER stress response element (ERSE) upon ER stress. Binds to the consensus 5'-GATGACGTG[TG]N(3)[AT]T-3' sequence related to cAMP responsive element (CRE)-like sequences. Binds the Tax-responsive element (TRE) present in the long terminal repeat (LTR) of T-cell leukemia virus type 1 (HTLV-I) and to the TPA response elements (TRE). Associates preferentially to the HDAC3 gene promoter region in a static flow-dependent manner. Binds to the CDH5/VE-cadherin gene promoter region. In terms of biological role, functions as a stress-inducible potent transcriptional activator during endoplasmic reticulum (ER) stress by inducing unfolded protein response (UPR) target genes via binding to the UPR element (UPRE). Up-regulates target genes encoding ER chaperones and ER-associated degradation (ERAD) components to enhance the capacity of productive folding and degradation mechanism, respectively, in order to maintain the homeostasis of the ER under ER stress. Plays a role in the production of immunoglobulins and interleukin-6 in the presence of stimuli required for plasma cell differentiation, and promotes as well membrane phospholipid biosynthesis necessary for ER expansion. Contributes to the VEGF-induced endothelial cell (EC) growth and proliferation in a Akt/GSK-dependent and/or -independent signaling pathway, respectively, leading to beta-catenin nuclear translocation and E2F2 gene expression. Promotes umbilical vein EC apoptosis and atherosclerotisis development in a caspase-dependent signaling pathway, and contributes to VEGF-induced EC proliferation and angiogenesis in adult tissues under ischemic conditions. Involved in the regulation of endostatin-induced autophagy in EC through BECN1 transcriptional activation. Plays a role as an oncogene by promoting tumor progression: stimulates zinc finger protein SNAI1 transcription to induce epithelial-to-mesenchymal (EMT) transition, cell migration and invasion of breast cancer cells. Involved in adipocyte differentiation by regulating lipogenic gene expression during lactation. Plays a role in the survival of both dopaminergic neurons of the substantia nigra pars compacta (SNpc), by maintaining protein homeostasis and of myeloma cells. Increases insulin sensitivity in the liver as a response to a high carbohydrate diet, resulting in improved glucose tolerance. Also improves glucose homeostasis in an ER stress- and/or insulin-independent manner through both binding and proteasome-induced degradation of the transcription factor FOXO1, hence resulting in suppression of gluconeogenic genes expression and in a reduction of blood glucose levels. Controls the induction of de novo fatty acid synthesis in hepatocytes by regulating the expression of a subset of lipogenic genes in an ER stress- and UPR-independent manner. Binds to the 5'-CCACG-3' motif in the PPARG promoter. Associates preferentially to the HDAC3 gene promoter region in a disturbed flow-dependent manner. Binds to the BECN1 gene promoter region. Binds to the CDH5/VE-cadherin gene promoter region. Binds to the ER stress response element (ERSE) upon ER stress. In Mus musculus (Mouse), this protein is X-box-binding protein 1.